Reading from the N-terminus, the 404-residue chain is NADH-quinone oxidoreductase subunit D 2 (404 aa).

This sequence belongs to the complex I 49 kDa subunit family. In terms of assembly, NDH-1 is composed of 14 different subunits. Subunits NuoB, C, D, E, F, and G constitute the peripheral sector of the complex.

The protein resides in the cell inner membrane. The enzyme catalyses a quinone + NADH + 5 H(+)(in) = a quinol + NAD(+) + 4 H(+)(out). Functionally, NDH-1 shuttles electrons from NADH, via FMN and iron-sulfur (Fe-S) centers, to quinones in the respiratory chain. The immediate electron acceptor for the enzyme in this species is believed to be ubiquinone. Couples the redox reaction to proton translocation (for every two electrons transferred, four hydrogen ions are translocated across the cytoplasmic membrane), and thus conserves the redox energy in a proton gradient. The sequence is that of NADH-quinone oxidoreductase subunit D 2 from Sinorhizobium medicae (strain WSM419) (Ensifer medicae).